Reading from the N-terminus, the 449-residue chain is Probable magnetosome protein Mms48 (449 aa).

The first 18 residues, 1–18, serve as a signal peptide directing secretion; it reads MLLRLIVLLIFMSPVVFA. A helical transmembrane segment spans residues 40 to 60; that stretch reads SNMPVLLAVILVVFLIFSALS. One copy of the TPR repeat lies at 323–356; sequence PDGHLAAGEAAFAVQKWGVARRHIMAALKIAPDA.

It localises to the magnetosome membrane. Overexpression in wild-type cells increases the number of cells with double magnetosome chains significantly. The 4 genes of this operon collectively influence magnetosome size and number. The sequence is that of Probable magnetosome protein Mms48 from Magnetospirillum gryphiswaldense (strain DSM 6361 / JCM 21280 / NBRC 15271 / MSR-1).